The following is a 156-amino-acid chain: MAKSKNHTTHNQSRKWHRNGIKKPRSQRYESLKGVDPKFLRNMRFAKKHNKKGLKKMQANNAKAVSARAEAIKALVKPQAVKPKMPKGSSRKLSRLAFIAHPKLGKKIRSYMAKGRRLCQPKPKVQTKAEAKAPAKAQAKAPAQAPKGAQAPVKAP.

Positions 1-26 are enriched in basic residues; sequence MAKSKNHTTHNQSRKWHRNGIKKPRS. 2 disordered regions span residues 1 to 35 and 116 to 156; these read MAKS…LKGV and RRLC…VKAP. An N6-methyllysine modification is found at lysine 5. Serine 31 carries the phosphoserine modification. Position 33 is an N6-acetyllysine (lysine 33). A run of 2 repeats spans residues 129 to 136 and 137 to 144. A 2 X 8 AA tandem repeats of A-X-A-K-A-P-A-[KQ] region spans residues 129–144; the sequence is AEAKAPAKAQAKAPAQ. Residues 134-156 show a composition bias toward low complexity; that stretch reads PAKAQAKAPAQAPKGAQAPVKAP.

The protein belongs to the eukaryotic ribosomal protein eL29 family. In terms of assembly, component of the large ribosomal subunit.

It is found in the cytoplasm. Its function is as follows. Component of the large ribosomal subunit. The ribosome is a large ribonucleoprotein complex responsible for the synthesis of proteins in the cell. In Rattus norvegicus (Rat), this protein is Large ribosomal subunit protein eL29 (Rpl29).